Consider the following 160-residue polypeptide: Cyclic pyranopterin monophosphate synthase (160 aa).

Residues 75–77 (MCH) and 115–116 (ME) contribute to the substrate site. Residue aspartate 130 is part of the active site.

The protein belongs to the MoaC family. As to quaternary structure, homohexamer; trimer of dimers.

It catalyses the reaction (8S)-3',8-cyclo-7,8-dihydroguanosine 5'-triphosphate = cyclic pyranopterin phosphate + diphosphate. The protein operates within cofactor biosynthesis; molybdopterin biosynthesis. In terms of biological role, catalyzes the conversion of (8S)-3',8-cyclo-7,8-dihydroguanosine 5'-triphosphate to cyclic pyranopterin monophosphate (cPMP). The polypeptide is Cyclic pyranopterin monophosphate synthase (Lysinibacillus sphaericus (strain C3-41)).